Reading from the N-terminus, the 214-residue chain is Thymidylate kinase (214 aa).

10–17 provides a ligand contact to ATP; sequence GGEGAGKS.

It belongs to the thymidylate kinase family.

The catalysed reaction is dTMP + ATP = dTDP + ADP. Its function is as follows. Phosphorylation of dTMP to form dTDP in both de novo and salvage pathways of dTTP synthesis. The polypeptide is Thymidylate kinase (Brucella abortus (strain S19)).